Here is a 191-residue protein sequence, read N- to C-terminus: uncharacterized protein (191 aa).

Residues 3–63 (IDRKKLILEA…EIFTTLLKEM (61 aa)) enclose the HTH tetR-type domain. Residues 26–45 (TMDLVAKLANVGKGTIYTFF) constitute a DNA-binding region (H-T-H motif).

This is an uncharacterized protein from Bacillus subtilis (strain 168).